The following is a 237-amino-acid chain: Phosphatidylserine decarboxylase proenzyme (237 aa).

Ser-206 acts as the Schiff-base intermediate with substrate; via pyruvic acid in catalysis. Ser-206 is modified (pyruvic acid (Ser); by autocatalysis).

The protein belongs to the phosphatidylserine decarboxylase family. PSD-A subfamily. In terms of assembly, heterodimer of a large membrane-associated beta subunit and a small pyruvoyl-containing alpha subunit. Pyruvate is required as a cofactor. Is synthesized initially as an inactive proenzyme. Formation of the active enzyme involves a self-maturation process in which the active site pyruvoyl group is generated from an internal serine residue via an autocatalytic post-translational modification. Two non-identical subunits are generated from the proenzyme in this reaction, and the pyruvate is formed at the N-terminus of the alpha chain, which is derived from the carboxyl end of the proenzyme. The post-translation cleavage follows an unusual pathway, termed non-hydrolytic serinolysis, in which the side chain hydroxyl group of the serine supplies its oxygen atom to form the C-terminus of the beta chain, while the remainder of the serine residue undergoes an oxidative deamination to produce ammonia and the pyruvoyl prosthetic group on the alpha chain.

Its subcellular location is the cell membrane. The enzyme catalyses a 1,2-diacyl-sn-glycero-3-phospho-L-serine + H(+) = a 1,2-diacyl-sn-glycero-3-phosphoethanolamine + CO2. It functions in the pathway phospholipid metabolism; phosphatidylethanolamine biosynthesis; phosphatidylethanolamine from CDP-diacylglycerol: step 2/2. Its function is as follows. Catalyzes the formation of phosphatidylethanolamine (PtdEtn) from phosphatidylserine (PtdSer). This chain is Phosphatidylserine decarboxylase proenzyme, found in Rhodococcus erythropolis (strain PR4 / NBRC 100887).